The sequence spans 234 residues: Protein XNDC1N (234 aa).

The protein is Protein XNDC1N of Homo sapiens (Human).